The primary structure comprises 441 residues: 3'-N-debenzoyl-2'-deoxytaxol N-benzoyltransferase (441 aa).

Catalysis depends on proton acceptor residues His163 and Asp373.

It belongs to the plant acyltransferase family.

The catalysed reaction is 3'-N-debenzoyltaxol + benzoyl-CoA = paclitaxel + CoA + H(+). The protein operates within alkaloid biosynthesis; taxol biosynthesis. In terms of biological role, catalyzes the stereoselective coupling of the surrogate substrate N-debenzoyl-(3'RS)-2'-deoxytaxol with benzoyl-CoA to form predominantly one 3'-epimer of 2'-deoxytaxol. This enzymatic reaction constitutes the final acylation in the taxol biosynthetic pathway. In Taxus canadensis (Canadian yew), this protein is 3'-N-debenzoyl-2'-deoxytaxol N-benzoyltransferase.